Consider the following 202-residue polypeptide: Urease accessory protein UreE (202 aa).

The disordered stretch occupies residues 138–202 (RGAYHSHGGH…HGHHHGHKHD (65 aa)). Basic and acidic residues predominate over residues 147 to 193 (HSHDHGHAAHDHGHAAHDHGHNHDHDHGHAHGHDHQHDHNCDHDHDH).

The protein belongs to the UreE family.

It localises to the cytoplasm. Its function is as follows. Involved in urease metallocenter assembly. Binds nickel. Probably functions as a nickel donor during metallocenter assembly. The protein is Urease accessory protein UreE of Rhizobium etli (strain CIAT 652).